The following is a 506-amino-acid chain: Histidine ammonia-lyase (506 aa).

The segment at residues 143 to 145 is a cross-link (5-imidazolinone (Ala-Gly)); the sequence is ASG. S144 carries the post-translational modification 2,3-didehydroalanine (Ser).

Belongs to the PAL/histidase family. Contains an active site 4-methylidene-imidazol-5-one (MIO), which is formed autocatalytically by cyclization and dehydration of residues Ala-Ser-Gly.

It is found in the cytoplasm. It carries out the reaction L-histidine = trans-urocanate + NH4(+). The protein operates within amino-acid degradation; L-histidine degradation into L-glutamate; N-formimidoyl-L-glutamate from L-histidine: step 1/3. In Salmonella arizonae (strain ATCC BAA-731 / CDC346-86 / RSK2980), this protein is Histidine ammonia-lyase.